The chain runs to 409 residues: Sprouty-related, EVH1 domain-containing protein 2 (409 aa).

Residues 5–121 (APPEDDSYIV…RGVRKAIEDL (117 aa)) form the WH1 domain. The tract at residues 121–170 (LTEGSTTSSSTIHNEAELGDDDVFATSTDSSSNSSQKREPPVRTIASPLP) is disordered. The segment covering 123-133 (EGSTTSSSTIH) has biased composition (polar residues). Low complexity predominate over residues 146-155 (TSTDSSSNSS). One can recognise a KBD domain in the interval 199-253 (PHRHVSFPDDDDEIVRINPRERNWLTGYEDYRQAPIHRKYPDTESIDSYVRFAKS). An SPR domain is found at 299 to 407 (RCIYCRDMFN…CGCCGGKHKA (109 aa)).

It is found in the cell membrane. The protein resides in the cytoplasmic vesicle. Its subcellular location is the secretory vesicle membrane. It localises to the cytoplasm. Negatively regulates Ras signaling pathways and downstream activation of MAP kinases. The polypeptide is Sprouty-related, EVH1 domain-containing protein 2 (spred2) (Xenopus tropicalis (Western clawed frog)).